A 377-amino-acid chain; its full sequence is tRNA-queuosine alpha-mannosyltransferase (377 aa).

The protein belongs to the glycosyltransferase group 1 family. Glycosyltransferase 4 subfamily.

The enzyme catalyses queuosine(34) in tRNA(Asp) + GDP-alpha-D-mannose = O-4''-alpha-D-mannosylqueuosine(34) in tRNA(Asp) + GDP + H(+). Its function is as follows. Glycosyltransferase that specifically catalyzes mannosylation of cytoplasmic tRNA(Asp) modified with queuosine at position 34 (queuosine(34)). Mannosylates the cyclopentene moiety of queuosine(34) in tRNA(Asp) to form mannosyl-queuosine(34). This Drosophila melanogaster (Fruit fly) protein is tRNA-queuosine alpha-mannosyltransferase.